The following is a 76-amino-acid chain: Large ribosomal subunit protein bL31 (76 aa).

4 residues coordinate Zn(2+): Cys-16, Cys-18, Cys-37, and Cys-40.

Belongs to the bacterial ribosomal protein bL31 family. Type A subfamily. In terms of assembly, part of the 50S ribosomal subunit. Requires Zn(2+) as cofactor.

In terms of biological role, binds the 23S rRNA. The chain is Large ribosomal subunit protein bL31 from Maridesulfovibrio salexigens (strain ATCC 14822 / DSM 2638 / NCIMB 8403 / VKM B-1763) (Desulfovibrio salexigens).